A 786-amino-acid chain; its full sequence is Ciliated left-right organizer ZP-N domains-containing protein (786 aa).

The first 18 residues, 1 to 18 (MWGSVAVVWAICLACIQP), serve as a signal peptide directing secretion.

As to expression, expressed specifically by cells of the ciliated left-right organizer.

Plays a role in left-right patterning process. The protein is Ciliated left-right organizer ZP-N domains-containing protein (Ciroz) of Mus musculus (Mouse).